The following is a 431-amino-acid chain: Glutamate-1-semialdehyde 2,1-aminomutase 1 (431 aa).

Position 268 is an N6-(pyridoxal phosphate)lysine (lysine 268).

Belongs to the class-III pyridoxal-phosphate-dependent aminotransferase family. HemL subfamily. Homodimer. Requires pyridoxal 5'-phosphate as cofactor.

Its subcellular location is the cytoplasm. The catalysed reaction is (S)-4-amino-5-oxopentanoate = 5-aminolevulinate. The protein operates within porphyrin-containing compound metabolism; protoporphyrin-IX biosynthesis; 5-aminolevulinate from L-glutamyl-tRNA(Glu): step 2/2. In Bacillus pumilus (strain SAFR-032), this protein is Glutamate-1-semialdehyde 2,1-aminomutase 1.